A 109-amino-acid chain; its full sequence is Somatostatin-2 (109 aa).

Positions 1–16 (MQFLASLVSFLLVVWS) are cleaved as a signal peptide. Residues 17 to 80 (VKATALPVED…EPLENKLEER (64 aa)) constitute a propeptide that is removed on maturation. Cys-98 and Cys-109 are oxidised to a cystine.

This sequence belongs to the somatostatin family.

The protein localises to the secreted. Its function is as follows. Somatostatin inhibits the release of somatotropin. This chain is Somatostatin-2 (sst2), found in Protopterus annectens (African lungfish).